We begin with the raw amino-acid sequence, 530 residues long: Autoinducer-2 kinase (530 aa).

This sequence belongs to the FGGY kinase family.

It localises to the cytoplasm. It carries out the reaction (S)-4,5-dihydroxypentane-2,3-dione + ATP = (2S)-2-hydroxy-3,4-dioxopentyl phosphate + ADP + H(+). In terms of biological role, catalyzes the phosphorylation of autoinducer-2 (AI-2) to phospho-AI-2, which subsequently inactivates the transcriptional regulator LsrR and leads to the transcription of the lsr operon. Phosphorylates the ring-open form of (S)-4,5-dihydroxypentane-2,3-dione (DPD), which is the precursor to all AI-2 signaling molecules, at the C5 position. The protein is Autoinducer-2 kinase of Photorhabdus laumondii subsp. laumondii (strain DSM 15139 / CIP 105565 / TT01) (Photorhabdus luminescens subsp. laumondii).